The chain runs to 397 residues: Tubby-like protein 8 (397 aa).

Over residues 1-16 the composition is skewed to basic and acidic residues; that stretch reads MAGSRKVNDLLEENKG. Residues 1–46 form a disordered region; the sequence is MAGSRKVNDLLEENKGNVDTITGSLSTQKGEDKENVSPEKVSTSVE. Residues 17-28 show a composition bias toward polar residues; it reads NVDTITGSLSTQ.

Belongs to the TUB family. Mostly expressed in roots, flowers and siliques.

This Arabidopsis thaliana (Mouse-ear cress) protein is Tubby-like protein 8.